We begin with the raw amino-acid sequence, 211 residues long: uncharacterized protein (211 aa).

Disordered stretches follow at residues 45–74 (RSCGRSSTGGCSPCSGPGPSSPRTSRGALS) and 147–211 (AETR…WEEP). The segment covering 48–71 (GRSSTGGCSPCSGPGPSSPRTSRG) has biased composition (low complexity). A compositionally biased stretch (polar residues) spans 195 to 205 (DSGSIKMSENE).

This is an uncharacterized protein from Homo sapiens (Human).